Consider the following 151-residue polypeptide: Phosphopantetheine adenylyltransferase (151 aa).

T9 lines the substrate pocket. Residues 9-10 and H17 contribute to the ATP site; that span reads TF. Residues K41, T73, and R87 each coordinate substrate. ATP-binding positions include 88–90, E98, and 122–128; these read GIR and LTSISST.

The protein belongs to the bacterial CoaD family. In terms of assembly, homohexamer. Mg(2+) is required as a cofactor.

The protein localises to the cytoplasm. It catalyses the reaction (R)-4'-phosphopantetheine + ATP + H(+) = 3'-dephospho-CoA + diphosphate. It participates in cofactor biosynthesis; coenzyme A biosynthesis; CoA from (R)-pantothenate: step 4/5. Functionally, reversibly transfers an adenylyl group from ATP to 4'-phosphopantetheine, yielding dephospho-CoA (dPCoA) and pyrophosphate. The chain is Phosphopantetheine adenylyltransferase from Phocaeicola vulgatus (strain ATCC 8482 / DSM 1447 / JCM 5826 / CCUG 4940 / NBRC 14291 / NCTC 11154) (Bacteroides vulgatus).